The sequence spans 274 residues: Exosome complex component Rrp42 (274 aa).

This sequence belongs to the RNase PH family. Rrp42 subfamily. In terms of assembly, component of the archaeal exosome complex. Forms a hexameric ring-like arrangement composed of 3 Rrp41-Rrp42 heterodimers. The hexameric ring associates with a trimer of Rrp4 and/or Csl4 subunits.

The protein localises to the cytoplasm. Functionally, non-catalytic component of the exosome, which is a complex involved in RNA degradation. Contributes to the structuring of the Rrp41 active site. The chain is Exosome complex component Rrp42 from Pyrococcus abyssi (strain GE5 / Orsay).